Here is a 485-residue protein sequence, read N- to C-terminus: Dipeptide and tripeptide permease C (485 aa).

The Cytoplasmic segment spans residues 1–12 (MKTPSQPRAIYY). Residues 13 to 33 (IVAIQIWEYFSFYGMRALLIL) traverse the membrane as a helical segment. At 34–46 (YLTHQLGFDDNHA) the chain is on the periplasmic side. A helical membrane pass occupies residues 47–67 (ISLFSAYASLVYVTPILGGWL). The Cytoplasmic segment spans residues 68–70 (ADR). The helical transmembrane segment at 71 to 93 (LLGNRTAVIAGALLMTLGHVVLG) threads the bilayer. Topologically, residues 94-102 (IDTNSTFSL) are periplasmic. A helical transmembrane segment spans residues 103 to 125 (YLALAIIICGYGLFKSNISCLLG). Residues 126–140 (ELYDENDHRRDGGFS) are Cytoplasmic-facing. Residues 141 to 161 (LLYAAGNIGSIAAPIACGLAA) traverse the membrane as a helical segment. Residues 162–164 (QWY) lie on the Periplasmic side of the membrane. Residues 165–185 (GWHVGFALAGGGMFIGLLIFL) form a helical membrane-spanning segment. At 186 to 208 (SGHRHFQSTRSMDKKALTSVKFA) the chain is on the cytoplasmic side. A helical transmembrane segment spans residues 209-229 (LPVWSWLVVMLCLAPVFFTLL). The Periplasmic segment spans residues 230 to 234 (LENDW). The helical transmembrane segment at 235–255 (SGYLLAIVCLIAAQIIARMMI) threads the bilayer. Over 256 to 262 (KFPEHRR) the chain is Cytoplasmic. The helical transmembrane segment at 263–283 (ALWQIVLLMFVGTLFWVLAQQ) threads the bilayer. The Periplasmic portion of the chain corresponds to 284-307 (GGSTISLFIDRFVNRQAFNIEVPT). Residues 308–328 (ALFQSVNAIAVMLAGVVLAWL) form a helical membrane-spanning segment. Residues 329–340 (ASPESRGNSTLR) lie on the Cytoplasmic side of the membrane. Residues 341 to 361 (VWLKFAFGLLLMACGFMLLAF) form a helical membrane-spanning segment. Topologically, residues 362–375 (DARHAAADGQASMG) are periplasmic. The helical transmembrane segment at 376–396 (VMISGLALMGFAELFIDPVAI) threads the bilayer. Over 397–406 (AQITRLKMSG) the chain is Cytoplasmic. The chain crosses the membrane as a helical span at residues 407–427 (VLTGIYMLATGAVANWLAGVV). The Periplasmic portion of the chain corresponds to 428–446 (AQQTTESQISGMAIAAYQR). A helical membrane pass occupies residues 447-467 (FFSQMGEWTLACVAIIVVLAF). The Cytoplasmic segment spans residues 468–485 (ATRFLFSTPTNMIQESND).

It belongs to the major facilitator superfamily. Proton-dependent oligopeptide transporter (POT/PTR) (TC 2.A.17) family. Monomer.

It is found in the cell inner membrane. Its function is as follows. Proton-dependent permease that transports di- and tripeptides. Shows significantly higher specificity towards dipeptides than tripeptides. Has a preference for dipeptides with a C-terminal Lys residue. Can bind Ala-Lys, Lys-Ala, Ala-Ala. Can also transport alanine and trialanine. This Escherichia coli (strain K12) protein is Dipeptide and tripeptide permease C.